The sequence spans 356 residues: Arginine kinase (356 aa).

An N-acetylalanine modification is found at Ala2. The Phosphagen kinase N-terminal domain occupies 9 to 91; that stretch reads KLEEGFKKLE…FDPIIEDYHK (83 aa). An L-arginine-binding site is contributed by 64 to 68; the sequence is GVGIY. The Phosphagen kinase C-terminal domain maps to 119–356; that stretch reads FVISTRVRCG…LELIKIEKEM (238 aa). ATP-binding positions include 122 to 126 and His185; that span reads STRVR. An L-arginine-binding site is contributed by Glu225. Residue Arg229 coordinates ATP. Cys271 is an L-arginine binding site. ATP is bound by residues 280-284 and 309-314; these read RASVH and RGTRGE. Glu314 serves as a coordination point for L-arginine.

It belongs to the ATP:guanido phosphotransferase family.

The catalysed reaction is L-arginine + ATP = N(omega)-phospho-L-arginine + ADP + H(+). The protein is Arginine kinase of Homarus gammarus (European lobster).